Reading from the N-terminus, the 240-residue chain is Adapter protein MecA (240 aa).

Belongs to the MecA family. Homodimer.

Its function is as follows. Enables the recognition and targeting of unfolded and aggregated proteins to the ClpC protease or to other proteins involved in proteolysis. The sequence is that of Adapter protein MecA from Streptococcus mutans serotype c (strain ATCC 700610 / UA159).